The following is a 255-amino-acid chain: Zinc D-Ala-D-Ala carboxypeptidase (255 aa).

Residues 1–42 form the signal peptide; it reads MRPRPIRLLLTALVGAGLAFAPVSAVAAPTATASASADVGAL. At Asp43 the chain carries Blocked amino end (Asp). 2 disulfide bridges follow: Cys45-Cys123 and Cys136-Cys184. A substrate-binding site is contributed by Arg180. A Zn(2+)-binding site is contributed by His196. A disulfide bond links Cys212 and Cys253. His234 acts as the Proton donor in catalysis. Residues His237 and His239 each contribute to the Zn(2+) site.

This sequence belongs to the peptidase M15 family. Zn(2+) serves as cofactor. In terms of processing, the N-terminus is partially blocked as a result of the cyclization of the first two amino acids into anhydroaspartylglycine imide.

Its subcellular location is the secreted. The enzyme catalyses Cleavage of the bond: (Ac)2-L-lysyl-D-alanyl-|-D-alanine.. In terms of biological role, this enzyme catalyzes carboxypeptidation and transpeptidation reactions involved in bacterial cell wall metabolism. It effectively catalyzes the transfer of the N-alpha, N-epsilon-diacetyl-L-lysyl-D-alanyl electrophilic group of the standard tripeptide substrate N-alpha,N-epsilon-diacetyl-L-lysyl-D-alanyl-D-alanine to water. It also performs a weak beta-lactamase activity, hydrolyzing penicillin into penicilloate at a very low rate. This is Zinc D-Ala-D-Ala carboxypeptidase from Streptomyces albus G.